Here is a 231-residue protein sequence, read N- to C-terminus: Large ribosomal subunit protein uL1 (231 aa).

The protein belongs to the universal ribosomal protein uL1 family. In terms of assembly, part of the 50S ribosomal subunit.

Its function is as follows. Binds directly to 23S rRNA. The L1 stalk is quite mobile in the ribosome, and is involved in E site tRNA release. Functionally, protein L1 is also a translational repressor protein, it controls the translation of the L11 operon by binding to its mRNA. The polypeptide is Large ribosomal subunit protein uL1 (Azoarcus sp. (strain BH72)).